Reading from the N-terminus, the 464-residue chain is GDNF family receptor alpha-2 (464 aa).

The first 21 residues, 1-21 (MILANAFCLFFFLDETLRSLA), serve as a signal peptide directing secretion. 14 disulfides stabilise this stretch: Cys-40–Cys-93, Cys-47–Cys-53, Cys-63–Cys-78, Cys-95–Cys-105, Cys-161–Cys-222, Cys-168–Cys-174, Cys-185–Cys-200, Cys-195–Cys-241, Cys-224–Cys-229, Cys-251–Cys-323, Cys-258–Cys-264, Cys-275–Cys-293, Cys-285–Cys-347, and Cys-325–Cys-335. Residue Asn-52 is glycosylated (N-linked (GlcNAc...) asparagine). Asn-357 is a glycosylation site (N-linked (GlcNAc...) asparagine). The segment at 363-392 (MSPKGPTFSATQAPRVEKTPSLPDDLSDST) is disordered. Positions 381–392 (TPSLPDDLSDST) are enriched in low complexity. A glycan (N-linked (GlcNAc...) asparagine) is linked at Asn-413. Ser-443 is lipidated: GPI-anchor amidated serine. Residues 444 to 464 (CRARLSTALTALPLLMVTLAQ) constitute a propeptide, removed in mature form.

This sequence belongs to the GDNFR family. Interacts with NRTN ligand and RET: forms a 2:2:2 ternary complex composed of NRTN ligand, GFRA2 and RET receptor. Also forms a 4:4:4 tetrameric complex composed of 4 copies of NRTN ligand, GFRA2 and RET receptor, which prevents endocytosis of RET. Interacts with SORL1. In terms of tissue distribution, neurons of the superior cervical and dorsal root ganglia, and adult brain and testis. Low level in the substantia nigra, spleen and adrenal gland. Isoform 1, isoform 2 and isoform 3 are all expressed in brain, liver, ileum, spleen, heart and kidney. In brain, isoform 1 is most abundant, isoform 2 slightly less and isoform 3 is lowest. No significant levels of isoform 1, isoform 2 or isoform 3 expression in testis.

It is found in the cell membrane. Its function is as follows. Receptor for neurturin (NRTN), a growth factor that supports the survival of sympathetic neurons. NRTN-binding leads to autophosphorylation and activation of the RET receptor. Also able to mediate GDNF signaling through the RET tyrosine kinase receptor. In terms of biological role, participates in NRTN-induced 'Ser-727' phosphorylation of STAT3. The polypeptide is GDNF family receptor alpha-2 (Mus musculus (Mouse)).